The following is a 467-amino-acid chain: tRNA modification GTPase MnmE (467 aa).

R27, E89, and R128 together coordinate (6S)-5-formyl-5,6,7,8-tetrahydrofolate. Residues 225–387 (GISMVIAGRP…LKQAIFTVVT (163 aa)) form the TrmE-type G domain. N235 contributes to the K(+) binding site. GTP is bound by residues 235-240 (NVGKSS), 254-260 (TSIAGTT), 279-282 (DTAG), and 368-370 (SAR). S239 is a binding site for Mg(2+). Residues T254, I256, and T259 each contribute to the K(+) site. T260 contacts Mg(2+). (6S)-5-formyl-5,6,7,8-tetrahydrofolate is bound at residue K467.

It belongs to the TRAFAC class TrmE-Era-EngA-EngB-Septin-like GTPase superfamily. TrmE GTPase family. As to quaternary structure, homodimer. Heterotetramer of two MnmE and two MnmG subunits. K(+) serves as cofactor.

It localises to the cytoplasm. Exhibits a very high intrinsic GTPase hydrolysis rate. Involved in the addition of a carboxymethylaminomethyl (cmnm) group at the wobble position (U34) of certain tRNAs, forming tRNA-cmnm(5)s(2)U34. The chain is tRNA modification GTPase MnmE from Desulfotalea psychrophila (strain LSv54 / DSM 12343).